Reading from the N-terminus, the 219-residue chain is Orotate phosphoribosyltransferase (219 aa).

Lysine 26 provides a ligand contact to 5-phospho-alpha-D-ribose 1-diphosphate. Orotate is bound at residue 34–35 (FF). 5-phospho-alpha-D-ribose 1-diphosphate-binding positions include 72 to 73 (YK), arginine 98, lysine 99, lysine 102, histidine 104, and 124 to 132 (DDVITAGTA). The orotate site is built by threonine 128 and arginine 156.

The protein belongs to the purine/pyrimidine phosphoribosyltransferase family. PyrE subfamily. As to quaternary structure, homodimer. Requires Mg(2+) as cofactor.

It carries out the reaction orotidine 5'-phosphate + diphosphate = orotate + 5-phospho-alpha-D-ribose 1-diphosphate. The protein operates within pyrimidine metabolism; UMP biosynthesis via de novo pathway; UMP from orotate: step 1/2. Its function is as follows. Catalyzes the transfer of a ribosyl phosphate group from 5-phosphoribose 1-diphosphate to orotate, leading to the formation of orotidine monophosphate (OMP). The chain is Orotate phosphoribosyltransferase from Xanthomonas axonopodis pv. citri (strain 306).